The following is a 142-amino-acid chain: Small ribosomal subunit protein uS12 (142 aa).

It belongs to the universal ribosomal protein uS12 family. Part of the 30S ribosomal subunit.

Its function is as follows. With S4 and S5 plays an important role in translational accuracy. Located at the interface of the 30S and 50S subunits. The sequence is that of Small ribosomal subunit protein uS12 from Methanoregula boonei (strain DSM 21154 / JCM 14090 / 6A8).